We begin with the raw amino-acid sequence, 357 residues long: GTPase Obg (357 aa).

The region spanning 1 to 159 is the Obg domain; sequence MKFVDEAEIQ…RTLKLELKLL (159 aa). In terms of domain architecture, OBG-type G spans 160–343; the sequence is ADIGMLGFPN…IMKSAMTLFE (184 aa). Residues 166 to 173, 191 to 195, 213 to 216, 293 to 296, and 324 to 326 each bind GTP; these read GFPNVGKS, FTTLY, DVPG, NKAD, and SAV. Mg(2+)-binding residues include serine 173 and threonine 193.

It belongs to the TRAFAC class OBG-HflX-like GTPase superfamily. OBG GTPase family. In terms of assembly, monomer. Mg(2+) is required as a cofactor.

The protein localises to the cytoplasm. Functionally, an essential GTPase which binds GTP, GDP and possibly (p)ppGpp with moderate affinity, with high nucleotide exchange rates and a fairly low GTP hydrolysis rate. Plays a role in control of the cell cycle, stress response, ribosome biogenesis and in those bacteria that undergo differentiation, in morphogenesis control. The protein is GTPase Obg of Xylella fastidiosa (strain M23).